Here is a 624-residue protein sequence, read N- to C-terminus: Protein POLLEN DEFECTIVE IN GUIDANCE 1 (624 aa).

The tract at residues 20–63 is disordered; the sequence is SFENDDTSIRRSSSDPITGNVASESPRDYGKRKRSKKKKKKVNQ. Positions 33-42 are enriched in polar residues; the sequence is SDPITGNVAS. The segment covering 49-61 has biased composition (basic residues); sequence GKRKRSKKKKKKV. The next 6 membrane-spanning stretches (helical) occupy residues 263–283, 305–325, 391–411, 413–433, 545–565, and 578–598; these read VLID…LTVM, ASEL…ILLG, FVSD…ILLA, AITL…LLVS, LTFV…PVYA, and LWMV…KVLI.

It belongs to the TAPT1 family. Interacts with CRT3, but not with CRT1 or CNX. Expressed in inflorescences, siliques, roots and shoots. Expressed in early embryo, endosperm, mature pollen and pollen tubes, synergide cells and weakly in antipodal cells.

Its subcellular location is the membrane. The protein localises to the endoplasmic reticulum lumen. Functionally, probable component of the calreticulin 3 (CRT3) complex, acting probably as a co-chaperone involved in protein retention in the endoplasmic reticulum lumen. Required for micropylar pollen tube guidance. Plays an essential role in cell plate orientation or positioning in early embryo patterning. The polypeptide is Protein POLLEN DEFECTIVE IN GUIDANCE 1 (POD1) (Arabidopsis thaliana (Mouse-ear cress)).